A 105-amino-acid polypeptide reads, in one-letter code: MFAVIKAGGKQYKVDQNSVIKVEKIEGELGSKIQLNQVLMMGEYSKPSFIGTPLVKGAVVTAEITNQLRDNKIIVFKKKRRKNYRRKAGHRQELTELKILDITKQ.

The protein belongs to the bacterial ribosomal protein bL21 family. As to quaternary structure, part of the 50S ribosomal subunit. Contacts protein L20.

Its function is as follows. This protein binds to 23S rRNA in the presence of protein L20. The chain is Large ribosomal subunit protein bL21 from Rickettsia bellii (strain OSU 85-389).